A 619-amino-acid chain; its full sequence is Probable pectinesterase/pectinesterase inhibitor 25 (619 aa).

The signal sequence occupies residues 1–23; the sequence is MKMQTLNFTSSLLFLSFIFLSCA. The disordered stretch occupies residues 31 to 84; that stretch reads SPSQPHSEPPSQLPFEPPVESPFFPPSQPPIFVPPSQPPSLPPSQSQSPSLACK. A compositionally biased stretch (pro residues) spans 37-72; it reads SEPPSQLPFEPPVESPFFPPSQPPIFVPPSQPPSLP. Residues 73 to 231 are pectinesterase inhibitor 25; sequence PSQSQSPSLA…TRLYSISLGL (159 aa). N220, N255, N312, N325, and N364 each carry an N-linked (GlcNAc...) asparagine glycan. A pectinesterase 25 region spans residues 302–601; that stretch reads AVIVGPFKSD…FTVYNFTMGD (300 aa). Substrate is bound at residue T380. N-linked (GlcNAc...) asparagine glycosylation occurs at N382. Substrate is bound at residue Q410. Residue D433 is the Proton donor; for pectinesterase activity of the active site. The cysteines at positions 447 and 467 are disulfide-linked. D454 (nucleophile; for pectinesterase activity) is an active-site residue. N-linked (GlcNAc...) asparagine glycosylation occurs at N500. R522 and W524 together coordinate substrate. N550, N591, and N596 each carry an N-linked (GlcNAc...) asparagine glycan.

It in the N-terminal section; belongs to the PMEI family. The protein in the C-terminal section; belongs to the pectinesterase family. As to expression, expressed in siliques.

The protein localises to the secreted. It is found in the cell wall. It carries out the reaction [(1-&gt;4)-alpha-D-galacturonosyl methyl ester](n) + n H2O = [(1-&gt;4)-alpha-D-galacturonosyl](n) + n methanol + n H(+). It participates in glycan metabolism; pectin degradation; 2-dehydro-3-deoxy-D-gluconate from pectin: step 1/5. Its function is as follows. Acts in the modification of cell walls via demethylesterification of cell wall pectin. This is Probable pectinesterase/pectinesterase inhibitor 25 (PME25) from Arabidopsis thaliana (Mouse-ear cress).